Here is a 429-residue protein sequence, read N- to C-terminus: Citrate synthase, chromosomal (429 aa).

Active-site residues include H306 and D364.

The protein belongs to the citrate synthase family.

It catalyses the reaction oxaloacetate + acetyl-CoA + H2O = citrate + CoA + H(+). It participates in carbohydrate metabolism; tricarboxylic acid cycle; isocitrate from oxaloacetate: step 1/2. The sequence is that of Citrate synthase, chromosomal (ccsA) from Rhizobium tropici.